The following is a 103-amino-acid chain: Large ribosomal subunit protein eL14 (103 aa).

It belongs to the eukaryotic ribosomal protein eL14 family.

This is Large ribosomal subunit protein eL14 from Pyrobaculum arsenaticum (strain DSM 13514 / JCM 11321 / PZ6).